We begin with the raw amino-acid sequence, 191 residues long: Probable DNA-directed RNA polymerase subunit delta (191 aa).

The HTH HARE-type domain occupies 14 to 83; it reads LSMIEVARAI…GENKWGLRSW (70 aa). 2 stretches are compositionally biased toward acidic residues: residues 117 to 136 and 142 to 191; these read GDEDAIDYNDDDPEDEDFTE and EYDE…EEEV. The tract at residues 117-191 is disordered; that stretch reads GDEDAIDYND…DEEEEEEEEV (75 aa).

It belongs to the RpoE family. As to quaternary structure, RNAP is composed of a core of 2 alpha, a beta and a beta' subunits. The core is associated with a delta subunit and one of several sigma factors.

Its function is as follows. Participates in both the initiation and recycling phases of transcription. In the presence of the delta subunit, RNAP displays an increased specificity of transcription, a decreased affinity for nucleic acids, and an increased efficiency of RNA synthesis because of enhanced recycling. This is Probable DNA-directed RNA polymerase subunit delta from Streptococcus agalactiae serotype Ia (strain ATCC 27591 / A909 / CDC SS700).